The primary structure comprises 259 residues: Sesquipedalian-2 (259 aa).

A PH domain is found at 17–121 (PADHMGFLRT…WVKVLSRASF (105 aa)). Residues 124 to 149 (MRLVVRELESQLQDARQSLALQRRSS) adopt a coiled-coil conformation. The F&amp;H signature appears at 223–235 (CFSTLHDWYGQEI).

The protein belongs to the sesquipedalian family. Forms homodimers and heterodimers with PHETA1. Interacts with OCRL and INPP5B.

The protein localises to the early endosome. The protein resides in the recycling endosome. Its subcellular location is the golgi apparatus. It is found in the trans-Golgi network. It localises to the cytoplasmic vesicle. The protein localises to the clathrin-coated vesicle. Plays a role in endocytic trafficking. Required for receptor recycling from endosomes, both to the trans-Golgi network and the plasma membrane. This Homo sapiens (Human) protein is Sesquipedalian-2.